Here is a 1755-residue protein sequence, read N- to C-terminus: Transposon Ty1-ML2 Gag-Pol polyprotein (1755 aa).

Low complexity predominate over residues Met-1–Ser-16. 3 disordered regions span residues Met-1 to Gln-93, Pro-126 to Pro-173, and Gly-352 to Thr-421. Composition is skewed to polar residues over residues Thr-48–Ser-60 and Gln-127–Phe-152. Residues Thr-153 to Thr-165 are compositionally biased toward low complexity. Residues Asn-299–His-401 are RNA-binding. Low complexity predominate over residues Asn-402–Ser-418. Ser-416 carries the phosphoserine modification. Asp-461 serves as the catalytic For protease activity; shared with dimeric partner. Residues Asn-583–Cys-640 are integrase-type zinc finger-like. One can recognise an Integrase catalytic domain in the interval Asn-660 to Pro-835. The Mg(2+) site is built by Asp-671 and Asp-736. Disordered stretches follow at residues Ser-956–Lys-1087, Arg-1092–Pro-1111, and Asp-1130–Ala-1171. The span at Ser-960 to Thr-969 shows a compositional bias: low complexity. The span at Ser-1005–Thr-1015 shows a compositional bias: polar residues. Basic and acidic residues predominate over residues Glu-1038 to Ser-1053. Polar residues-rich tracts occupy residues Tyr-1054 to Asp-1082 and Pro-1101 to Pro-1111. The Bipartite nuclear localization signal motif lies at Lys-1178–Arg-1212. In terms of domain architecture, Reverse transcriptase Ty1/copia-type spans Asn-1338 to Gln-1476. Positions 1346, 1427, 1428, 1610, 1652, and 1685 each coordinate Mg(2+). The region spanning Asp-1610 to Lys-1752 is the RNase H Ty1/copia-type domain.

The capsid protein forms a homotrimer, from which the VLPs are assembled. The protease is a homodimer, whose active site consists of two apposed aspartic acid residues. In terms of processing, initially, virus-like particles (VLPs) are composed of the structural unprocessed proteins Gag and Gag-Pol, and also contain the host initiator methionine tRNA (tRNA(i)-Met) which serves as a primer for minus-strand DNA synthesis, and a dimer of genomic Ty RNA. Processing of the polyproteins occurs within the particle and proceeds by an ordered pathway, called maturation. First, the protease (PR) is released by autocatalytic cleavage of the Gag-Pol polyprotein yielding capsid protein p45 and a Pol-p154 precursor protein. This cleavage is a prerequisite for subsequent processing of Pol-p154 at the remaining sites to release the mature structural and catalytic proteins. Maturation takes place prior to the RT reaction and is required to produce transposition-competent VLPs.

The protein resides in the cytoplasm. Its subcellular location is the nucleus. It carries out the reaction DNA(n) + a 2'-deoxyribonucleoside 5'-triphosphate = DNA(n+1) + diphosphate. It catalyses the reaction Endonucleolytic cleavage to 5'-phosphomonoester.. In terms of biological role, capsid protein (CA) is the structural component of the virus-like particle (VLP), forming the shell that encapsulates the retrotransposons dimeric RNA genome. The particles are assembled from trimer-clustered units and there are holes in the capsid shells that allow for the diffusion of macromolecules. CA also has nucleocapsid-like chaperone activity, promoting primer tRNA(i)-Met annealing to the multipartite primer-binding site (PBS), dimerization of Ty1 RNA and initiation of reverse transcription. Its function is as follows. The aspartyl protease (PR) mediates the proteolytic cleavages of the Gag and Gag-Pol polyproteins after assembly of the VLP. Reverse transcriptase/ribonuclease H (RT) is a multifunctional enzyme that catalyzes the conversion of the retro-elements RNA genome into dsDNA within the VLP. The enzyme displays a DNA polymerase activity that can copy either DNA or RNA templates, and a ribonuclease H (RNase H) activity that cleaves the RNA strand of RNA-DNA heteroduplexes during plus-strand synthesis and hydrolyzes RNA primers. The conversion leads to a linear dsDNA copy of the retrotransposon that includes long terminal repeats (LTRs) at both ends. Functionally, integrase (IN) targets the VLP to the nucleus, where a subparticle preintegration complex (PIC) containing at least integrase and the newly synthesized dsDNA copy of the retrotransposon must transit the nuclear membrane. Once in the nucleus, integrase performs the integration of the dsDNA into the host genome. The sequence is that of Transposon Ty1-ML2 Gag-Pol polyprotein (TY1B-ML2) from Saccharomyces cerevisiae (strain ATCC 204508 / S288c) (Baker's yeast).